The following is a 596-amino-acid chain: Aspartic proteinase yapsin-7 (596 aa).

Positions 1 to 25 are cleaved as a signal peptide; sequence MTCLILWYLWLISTFQLEFATASTA. Residues Asn-26 and Asn-59 are each glycosylated (N-linked (GlcNAc...) asparagine). Topologically, residues 26-575 are lumenal; that stretch reads NTTTTAKSGT…SPYTFNKDPA (550 aa). In terms of domain architecture, Peptidase A1 spans 56-440; that stretch reads YYVNSTFGTP…DLEDNTIAIA (385 aa). Asp-74 is a catalytic residue. 7 N-linked (GlcNAc...) asparagine glycosylation sites follow: Asn-106, Asn-131, Asn-140, Asn-143, Asn-148, Asn-175, and Asn-308. Asp-321 is a catalytic residue. Residues Asn-391, Asn-455, Asn-478, Asn-484, Asn-549, and Asn-552 are each glycosylated (N-linked (GlcNAc...) asparagine). Residues 576 to 596 traverse the membrane as a helical segment; sequence GHVTRIASLLLLSIFSILIVL.

The protein belongs to the peptidase A1 family.

The protein localises to the cytoplasm. It is found in the endoplasmic reticulum membrane. The protein is Aspartic proteinase yapsin-7 (YPS7) of Saccharomyces cerevisiae (strain ATCC 204508 / S288c) (Baker's yeast).